The following is a 347-amino-acid chain: MAVSGFEGFEKRLELRFFDDDKPITKNPMGLRLIDFESLDQVLNEVQCTVVSAVANRSFDAYVLSESSLFVYPTKIIIKTCGTTQLLKSIRPLIHLARNLGLTLRACRYSRGSFIFPKAQPFPYTSFKDEVIVVEESLPKSLCYRKASVMTPSNNPSRAWHVFTASADVESDEHVVVVEVCMTELDRVNARSFFKRKGDEKNNSDSAGKEMTRLSGIDNINANAYICDFAFDPCGYSMNGVDGDRYSTIHVTPEDGFSYASFECGLSLYDNGHEDISEVLSRAIDVFRPSDVSIATTYGGEDYNHEVTKRVERVLAKKLDLKCRSRLMDEFPGSGTVVYQSFTPRRK.

Catalysis depends on residues glutamate 7 and glutamate 10. Glutamate 66 provides a ligand contact to substrate. Residue serine 67 is the Schiff-base intermediate with substrate; via pyruvic acid of the active site. Position 67 is a pyruvic acid (Ser); by autocatalysis (serine 67). Residue cysteine 81 is the Proton donor; for catalytic activity of the active site. Residues serine 237 and histidine 250 each act as proton acceptor; for processing activity in the active site. Glutamate 254 serves as a coordination point for substrate.

The protein belongs to the eukaryotic AdoMetDC family. Pyruvate is required as a cofactor. Is synthesized initially as an inactive proenzyme. Formation of the active enzyme involves a self-maturation process in which the active site pyruvoyl group is generated from an internal serine residue via an autocatalytic post-translational modification. Two non-identical subunits are generated from the proenzyme in this reaction, and the pyruvate is formed at the N-terminus of the alpha chain, which is derived from the carboxyl end of the proenzyme. The post-translation cleavage follows an unusual pathway, termed non-hydrolytic serinolysis, in which the side chain hydroxyl group of the serine supplies its oxygen atom to form the C-terminus of the beta chain, while the remainder of the serine residue undergoes an oxidative deamination to produce ammonia and the pyruvoyl group blocking the N-terminus of the alpha chain.

It carries out the reaction S-adenosyl-L-methionine + H(+) = S-adenosyl 3-(methylsulfanyl)propylamine + CO2. The protein operates within amine and polyamine biosynthesis; S-adenosylmethioninamine biosynthesis; S-adenosylmethioninamine from S-adenosyl-L-methionine: step 1/1. Functionally, essential for biosynthesis of the polyamines spermidine and spermine. Essential for polyamine homeostasis, and normal plant embryogenesis, growth and development. In Arabidopsis thaliana (Mouse-ear cress), this protein is S-adenosylmethionine decarboxylase proenzyme 4.